The following is a 604-amino-acid chain: Glutamine--fructose-6-phosphate aminotransferase [isomerizing] (604 aa).

Cysteine 2 serves as the catalytic Nucleophile; for GATase activity. The 217-residue stretch at 2-218 folds into the Glutamine amidotransferase type-2 domain; it reads CGIVGVVGNT…DKELVIVKKD (217 aa). 2 SIS domains span residues 284-423 and 456-594; these read IIKS…ANGK and VEQL…VDKP. The active-site For Fru-6P isomerization activity is the lysine 599.

As to quaternary structure, homodimer.

The protein localises to the cytoplasm. The catalysed reaction is D-fructose 6-phosphate + L-glutamine = D-glucosamine 6-phosphate + L-glutamate. In terms of biological role, catalyzes the first step in hexosamine metabolism, converting fructose-6P into glucosamine-6P using glutamine as a nitrogen source. The polypeptide is Glutamine--fructose-6-phosphate aminotransferase [isomerizing] (Streptococcus agalactiae serotype V (strain ATCC BAA-611 / 2603 V/R)).